An 887-amino-acid polypeptide reads, in one-letter code: Tubulin polyglutamylase TTLL7 (887 aa).

A disordered region spans residues 1–21 (MPSLPQEGVIQGPSPLDLNTE). The 353-residue stretch at 38–390 (KGTITANVAG…RTSDKRRNLA (353 aa)) folds into the TTL domain. ATP is bound by residues Lys-160, 166–167 (MG), 188–191 (QEYI), and 201–203 (KFD). Arg-227 lines the L-glutamate pocket. 249–250 (TN) serves as a coordination point for ATP. Tyr-251, Ser-252, and Lys-271 together coordinate L-glutamate. Mg(2+) is bound by residues Asp-336, Glu-349, and Asn-351. Residue Lys-367 participates in L-glutamate binding. The interval 388–450 (NLAKQKAEAQ…ISREEHENRH (63 aa)) is c-MTBD region. Disordered regions lie at residues 519 to 621 (MGKT…TRPF) and 651 to 676 (LPHS…TKEQ). Residues 548–560 (SSDSSYDSSSSSS) show a composition bias toward low complexity. 2 stretches are compositionally biased toward polar residues: residues 593 to 621 (QQPS…TRPF) and 656 to 670 (DACS…SLRQ).

Belongs to the tubulin--tyrosine ligase family. In terms of assembly, interacts with both alpha- and beta-tubulin (via C-terminal tubulin tails). Requires Mg(2+) as cofactor. In terms of tissue distribution, highly expressed in the nervous system including spinal cord, thalamus, hippocampus, hypothalamus and cerebellum.

It localises to the cell projection. It is found in the cilium. The protein localises to the cytoplasm. Its subcellular location is the cytoskeleton. The protein resides in the cilium basal body. It localises to the dendrite. It is found in the perikaryon. The catalysed reaction is L-glutamyl-[protein] + L-glutamate + ATP = gamma-L-glutamyl-L-glutamyl-[protein] + ADP + phosphate + H(+). The enzyme catalyses (L-glutamyl)(n)-gamma-L-glutamyl-L-glutamyl-[protein] + L-glutamate + ATP = (L-glutamyl)(n+1)-gamma-L-glutamyl-L-glutamyl-[protein] + ADP + phosphate + H(+). Its function is as follows. Polyglutamylase which modifies tubulin, generating polyglutamate side chains of variable lengths on the gamma-carboxyl group of specific glutamate residues within the C-terminal tail of tubulin. Mediates both ATP-dependent initiation and elongation steps of the polyglutamylation reaction. Preferentially modifies the beta-tubulin tail over an alpha-tail. Competes with monoglycylase TTLL3 for modification site on beta-tubulin substrate, thereby creating an anticorrelation between glycylation and glutamylation reactions. Required for neurite growth; responsible for the strong increase in tubulin polyglutamylation during postnatal neuronal maturation. This chain is Tubulin polyglutamylase TTLL7, found in Homo sapiens (Human).